The sequence spans 409 residues: Nucleoprotein (409 aa).

Disordered stretches follow at residues 1 to 32, 46 to 84, 121 to 194, and 238 to 259; these read MASG…SSGN, SPQP…KGRR, ADVK…GSED, and VDQV…DKMN. The RNA-binding stretch occupies residues 29 to 160; the sequence is SSGNASWFQA…GNFRWDFIPL (132 aa). The CoV N NTD domain maps to 31 to 156; it reads GNASWFQAIK…GGPDGNFRWD (126 aa). Residues 70–84 are compositionally biased toward basic residues; the sequence is YWRRQARFKPGKGRR. The segment covering 162–179 has biased composition (low complexity); that stretch reads RGRSGRSTAASSAASSRP. 2 stretches are compositionally biased toward basic and acidic residues: residues 180–192 and 247–259; these read PSRE…RSGS and KGKE…DKMN. A phosphoserine; by host mark is found at S190 and S192. A CoV N CTD domain is found at 215-331; sequence TKAKADEMAH…QCVDGVGTRP (117 aa). Residues 226 to 333 form a dimerization region; the sequence is RYCKRTIPPG…VDGVGTRPKD (108 aa). An intrachain disulfide couples C320 to C323. Positions 326-409 are disordered; that stretch reads GVGTRPKDDE…GDSALGENEL (84 aa). Over residues 341–356 the composition is skewed to low complexity; that stretch reads RSSSRPATRTSSPAPR. Over residues 358-367 the composition is skewed to basic residues; that stretch reads QRLKKEKRPK. The span at 368–384 shows a compositional bias: basic and acidic residues; it reads KQDDEVDKALTSDEERN. T378 is subject to Phosphothreonine; by host. S379 carries the post-translational modification Phosphoserine; by host.

The protein belongs to the gammacoronavirus nucleocapsid protein family. Homooligomer. Both monomeric and oligomeric forms interact with RNA. Interacts with protein M. Interacts with NSP3; this interaction serves to tether the genome to the newly translated replicase-transcriptase complex at a very early stage of infection. In terms of processing, ADP-ribosylated. The ADP-ribosylation is retained in the virion during infection. Phosphorylated on serine and threonine residues.

Its subcellular location is the virion. The protein resides in the host endoplasmic reticulum-Golgi intermediate compartment. It is found in the host Golgi apparatus. Packages the positive strand viral genome RNA into a helical ribonucleocapsid (RNP) and plays a fundamental role during virion assembly through its interactions with the viral genome and membrane protein M. Plays an important role in enhancing the efficiency of subgenomic viral RNA transcription as well as viral replication. The sequence is that of Nucleoprotein from Avian infectious bronchitis virus (strain Gray) (IBV).